The primary structure comprises 366 residues: Patr class I histocompatibility antigen, C alpha chain (366 aa).

Residues 1-24 (MRVTAPRTLLLLLSGGLALTETWA) form the signal peptide. Residues 25–114 (GSHSLRYFDT…LRGYYNQSED (90 aa)) form an alpha-1 region. At 25 to 308 (GSHSLRYFDT…KPTSQPTIPI (284 aa)) the chain is on the extracellular side. An N-linked (GlcNAc...) asparagine glycan is attached at Asn-110. Positions 115-206 (GSHTLQWMYG…ENGKETLQRT (92 aa)) are alpha-2. Disulfide bonds link Cys-125–Cys-192 and Cys-227–Cys-283. Residues 207 to 298 (ECPKTHMTHH…GLPEPLTLRW (92 aa)) are alpha-3. One can recognise an Ig-like C1-type domain in the interval 209–297 (PKTHMTHHPV…EGLPEPLTLR (89 aa)). The segment at 299–308 (KPTSQPTIPI) is connecting peptide. Residues 309–332 (VGIVAGLAVLAVLAVLGAVVTAMM) form a helical membrane-spanning segment. Residues 333–366 (CRRKSSGGKGGSCSQAACSNSAQGSDESLIACKA) are Cytoplasmic-facing. Phosphoserine is present on residues Ser-357 and Ser-360.

The protein belongs to the MHC class I family. Heterodimer of an alpha chain and a beta chain (beta-2-microglobulin).

Its subcellular location is the membrane. Its function is as follows. Involved in the presentation of foreign antigens to the immune system. This chain is Patr class I histocompatibility antigen, C alpha chain, found in Pan troglodytes (Chimpanzee).